A 330-amino-acid polypeptide reads, in one-letter code: MAPEENAGTELLLQGFERRFLAVRTLRSFPWQSLEAKLRDSSDSELLRDILQKTVRHPVCVKHPPSVKYAWCFLSELIKKHEAVHTEPLDKLYEVLTETLMAKESTQGHRSYLLSSGGSVTLSKSTAIISHGTTGLVTWDAALYLAEWAIENPAAFINRTVLELGSGAGLTGLAICKMCRPRAYIFSDPHSRVLEQLRGNVLLNGLSLEADITGNLDSPRVTVAQLDWDVAMVHQLSAFQPDVVIAADVLYCPEAIVSLVGVLQRLAACREHKRAPEVYVAFTVRNPETCQLFTTELGRDGIRWEAEAHHDQKLFPYGEHLEMAMLNLTL.

S-adenosyl-L-methionine-binding positions include Trp-139, Gly-165 to Gly-167, Trp-228, and Ala-247.

The protein belongs to the class I-like SAM-binding methyltransferase superfamily. EEF2KMT family.

The protein is Putative protein N-methyltransferase FAM86B1 of Homo sapiens (Human).